Here is an 85-residue protein sequence, read N- to C-terminus: MAHKKAGGSTRNGRDSESKRLGVKRFGGETVTAGSIIVRQRGTRVHPGENVGLGKDHTLFAKVEGAVKFEVKGPNNRKYVSIVAA.

The segment at 1-26 (MAHKKAGGSTRNGRDSESKRLGVKRF) is disordered.

It belongs to the bacterial ribosomal protein bL27 family.

This Saccharophagus degradans (strain 2-40 / ATCC 43961 / DSM 17024) protein is Large ribosomal subunit protein bL27.